Here is a 550-residue protein sequence, read N- to C-terminus: Sorting nexin-33 (550 aa).

The region spanning Met1–Ser61 is the SH3 domain. The interval Arg62–Gly152 is disordered. Acidic residues predominate over residues Tyr86–Asp102. Positions Ser128–Asp144 are enriched in basic and acidic residues. A PX domain is found at Phe206–Gln316. In terms of domain architecture, BAR spans Leu347–Leu550.

Belongs to the sorting nexin family.

Its subcellular location is the cytoplasm. It localises to the cytosol. It is found in the membrane. The protein localises to the cytoplasmic vesicle membrane. Its function is as follows. Plays a role in the reorganization of the cytoskeleton, endocytosis and cellular vesicle trafficking, both during interphase and at the end of mitotic cell divisions. Required for efficient progress through mitosis and cytokinesis. Required for normal formation of the cleavage furrow at the end of mitosis. Modulates endocytosis of cell-surface proteins. Promotes membrane tubulation (in vitro). May promote the formation of macropinosomes. In Xenopus laevis (African clawed frog), this protein is Sorting nexin-33 (snx33).